We begin with the raw amino-acid sequence, 356 residues long: MCILTLVERKHLKNMVHVRLLVMMHILIIYSTFGAVRRPINIRVLEGNSCDTPQVIGGKCMNISLCDPAFVHSIAYQEHTPVCQQNAFYRVICCQPFLDFCENSKQFQIMHGIEAEPGMFPHLARLGLKSEEDGIAWTCSANIISERFLLTAAHCNPVNIAGLGCAESMQCDQQNTVKSFISNPKYKTSFKYHDIALVELEQNIRFNKRVLPICPYISKTDLHESEDLVIAGWGATESHFQSPRLMFATVRTVLQNDCKDHYASLLKASPNKKLHQGITDEMYCAQGALVDNVTEYIDACSGDSGGPLQTKQNNNLYLIGVISTGFGCGSSSPGLYTRVASYFGWIKETVSATRDN.

The 46-residue stretch at 49 to 94 (SCDTPQVIGGKCMNISLCDPAFVHSIAYQEHTPVCQQNAFYRVICC) folds into the Clip domain. 4 disulfides stabilise this stretch: Cys50/Cys93, Cys60/Cys83, Cys66/Cys94, and Cys139/Cys155. Asn62 carries an N-linked (GlcNAc...) asparagine glycan. Residues 109–351 (IMHGIEAEPG…YFGWIKETVS (243 aa)) enclose the Peptidase S1 domain. Active-site charge relay system residues include His154 and Asp194. A disulfide bridge links Cys258 with Cys284. Asn292 carries N-linked (GlcNAc...) asparagine glycosylation. A disulfide bridge links Cys300 with Cys328. The active-site Charge relay system is the Ser304.

Belongs to the peptidase S1 family. CLIP subfamily. In terms of assembly, in the active form, heterodimer of a p12 subunit and a p30 subunit; disulfide-linked. In terms of processing, secreted as a full-length protein. Following bacterium E.coli infection, proteolytically cleaved into two chains, p12 and p30, which remain covalently linked.

It is found in the secreted. In terms of biological role, probable serine protease which plays an essential role in the innate immune response against bacteria and protozoa infection by activating the melanization cascade. In the susceptible strain G3, appears to be dispensable for ookinete elimination which occurs by lysis. This Anopheles gambiae (African malaria mosquito) protein is CLIP domain-containing serine protease C9.